A 201-amino-acid chain; its full sequence is Small ribosomal subunit protein uS4 (201 aa).

Positions 91–155 (TRLDNVVYRA…STLPFQVARE (65 aa)) constitute an S4 RNA-binding domain.

This sequence belongs to the universal ribosomal protein uS4 family. In terms of assembly, part of the 30S ribosomal subunit. Contacts protein S5. The interaction surface between S4 and S5 is involved in control of translational fidelity.

In terms of biological role, one of the primary rRNA binding proteins, it binds directly to 16S rRNA where it nucleates assembly of the body of the 30S subunit. With S5 and S12 plays an important role in translational accuracy. The protein is Small ribosomal subunit protein uS4 of Nocardia farcinica (strain IFM 10152).